We begin with the raw amino-acid sequence, 633 residues long: Uracil permease (633 aa).

Helical transmembrane passes span 143-163 (WWQCWITIWIGYGFVGAFVVL), 173-193 (LSFPISSRASFGIFFSLWPVI), 197-217 (VMAIVWYSVQAYIAATPVSLM), 242-262 (YEFMCFFIFWAASLPFLLVPP), 268-288 (LFTVKAVLVPFASFGFLIWAI), 310-330 (FSWAFLRSLMGCMANFSTMVI), 350-370 (LVCIPFLFSITCLIGILVTAA), 400-420 (AGVFLISFVFAVAQLGTNISA), 442-462 (GSLFCAAMALCICPWNLMATS), 465-485 (FTMALSAYAIFLSSIAGVVCS), 521-541 (ALAAYLCGVAPCLPGFIAEVG), and 559-579 (YWVGYGLSFSSYTALCYFFPV).

The protein belongs to the purine-cytosine permease (2.A.39) family. Post-translationally, glycosylated (possible); but there is not yet direct biochemical evidence for it.

It localises to the membrane. Its function is as follows. Transport of uracil. The protein is Uracil permease (FUR4) of Saccharomyces cerevisiae (strain ATCC 204508 / S288c) (Baker's yeast).